Reading from the N-terminus, the 226-residue chain is PKHD-type hydroxylase Daci_1172 (226 aa).

The Fe2OG dioxygenase domain maps to Lys-78 to Ser-178. Residues His-96, Asp-98, and His-159 each coordinate Fe cation. Residue Arg-169 coordinates 2-oxoglutarate.

Fe(2+) serves as cofactor. L-ascorbate is required as a cofactor.

The polypeptide is PKHD-type hydroxylase Daci_1172 (Delftia acidovorans (strain DSM 14801 / SPH-1)).